The following is a 144-amino-acid chain: MPPKKKKVTGLIKLQINAGAANPAPPVGPALGQHGVNIMEFCKAYNAATESQRGMVVPVEITVYEDRSFTFVTKTPPAAKLILKAAGVDKGSGEPHKTKVAKLTAAQVREIATTKLPDLNANDLDAASKIIAGTARSMGITVEG.

Belongs to the universal ribosomal protein uL11 family. In terms of assembly, part of the ribosomal stalk of the 50S ribosomal subunit. Interacts with L10 and the large rRNA to form the base of the stalk. L10 forms an elongated spine to which L12 dimers bind in a sequential fashion forming a multimeric L10(L12)X complex. Post-translationally, one or more lysine residues are methylated.

Its function is as follows. Forms part of the ribosomal stalk which helps the ribosome interact with GTP-bound translation factors. The polypeptide is Large ribosomal subunit protein uL11 (Streptomyces griseus subsp. griseus (strain JCM 4626 / CBS 651.72 / NBRC 13350 / KCC S-0626 / ISP 5235)).